The sequence spans 607 residues: Cyclic-di-GMP receptor FimW (607 aa).

Residues 323–492 (ERTFQRTQGQ…GGTQMGIEMI (170 aa)) are pilZ-like domain. Residues 324–328 (RTFQR) carry the RXXXR motif motif. Positions 435–440 (NHSPGG) match the D/NXSXXG motif motif. Polar residues predominate over residues 568–582 (SQFEYRSAEPVNTPS). The tract at residues 568–607 (SQFEYRSAEPVNTPSDKPVTAPVARPPAGEEDFDSLWKSL) is disordered.

In terms of assembly, monomer in the absence of c-di-GMP. Forms dimers in the presence of c-di-GMP.

It is found in the cytoplasm. High-affinity cyclic-di-GMP binding protein that regulates type IV pili (T4P) elongation. Required for T4P-mediated surface attachment and walking motility during the early phases of surface colonization. Not required for twitching motility. Does not bind related nucleotides such as GMP, GDP, GTP or ATP. This is Cyclic-di-GMP receptor FimW from Pseudomonas aeruginosa (strain ATCC 15692 / DSM 22644 / CIP 104116 / JCM 14847 / LMG 12228 / 1C / PRS 101 / PAO1).